The chain runs to 141 residues: Large ribosomal subunit protein uL11 (141 aa).

It belongs to the universal ribosomal protein uL11 family. As to quaternary structure, part of the ribosomal stalk of the 50S ribosomal subunit. Interacts with L10 and the large rRNA to form the base of the stalk. L10 forms an elongated spine to which L12 dimers bind in a sequential fashion forming a multimeric L10(L12)X complex. One or more lysine residues are methylated.

Functionally, forms part of the ribosomal stalk which helps the ribosome interact with GTP-bound translation factors. This chain is Large ribosomal subunit protein uL11, found in Campylobacter lari (strain RM2100 / D67 / ATCC BAA-1060).